A 437-amino-acid chain; its full sequence is Adenylosuccinate synthetase (437 aa).

Residues 12-18 (GDEGKGK) and 40-42 (GHT) each bind GTP. Asp-13 serves as the catalytic Proton acceptor. Residues Asp-13 and Gly-40 each coordinate Mg(2+). Residues 13–16 (DEGK), 38–41 (NAGH), Thr-131, Arg-145, Gln-226, Thr-241, and Arg-305 contribute to the IMP site. The Proton donor role is filled by His-41. Residue 301–307 (ATTGRRR) coordinates substrate. GTP contacts are provided by residues Arg-307, 333–335 (KLD), and 415–417 (SVG).

It belongs to the adenylosuccinate synthetase family. In terms of assembly, homodimer. Mg(2+) is required as a cofactor.

The protein localises to the cytoplasm. The catalysed reaction is IMP + L-aspartate + GTP = N(6)-(1,2-dicarboxyethyl)-AMP + GDP + phosphate + 2 H(+). It functions in the pathway purine metabolism; AMP biosynthesis via de novo pathway; AMP from IMP: step 1/2. Plays an important role in the de novo pathway of purine nucleotide biosynthesis. Catalyzes the first committed step in the biosynthesis of AMP from IMP. This Desulfotalea psychrophila (strain LSv54 / DSM 12343) protein is Adenylosuccinate synthetase.